The sequence spans 609 residues: Putative pectinesterase/pectinesterase inhibitor 45 (609 aa).

A helical membrane pass occupies residues 25–45 (IILGVVSVLVVAAAIIGGAFA). Asn-51, Asn-62, Asn-100, Asn-114, Asn-183, Asn-229, Asn-296, Asn-306, Asn-346, and Asn-362 each carry an N-linked (GlcNAc...) asparagine glycan. The tract at residues 54 to 87 (QEQGKTTNNKSKDSPTKSESPSPKPPSSAAQTVK) is disordered. The segment at 89 to 241 (GQVDKIIQTL…QVLTSNSLAM (153 aa)) is pectinesterase inhibitor 45. The segment at 296–593 (NATVAKDGSG…FTVGPFLQGE (298 aa)) is pectinesterase 45. Substrate is bound by residues Thr-371 and Gln-401. Asp-424 acts as the Proton donor; for pectinesterase activity in catalysis. Residues Cys-438 and Cys-458 are joined by a disulfide bond. Residue Asp-445 is the Nucleophile; for pectinesterase activity of the active site. N-linked (GlcNAc...) asparagine glycosylation occurs at Asn-491. Substrate is bound by residues Arg-513 and Trp-515.

It in the N-terminal section; belongs to the PMEI family. This sequence in the C-terminal section; belongs to the pectinesterase family. As to expression, expressed in flower buds and pollen.

It is found in the membrane. It carries out the reaction [(1-&gt;4)-alpha-D-galacturonosyl methyl ester](n) + n H2O = [(1-&gt;4)-alpha-D-galacturonosyl](n) + n methanol + n H(+). It participates in glycan metabolism; pectin degradation; 2-dehydro-3-deoxy-D-gluconate from pectin: step 1/5. Its function is as follows. Acts in the modification of cell walls via demethylesterification of cell wall pectin. In Arabidopsis thaliana (Mouse-ear cress), this protein is Putative pectinesterase/pectinesterase inhibitor 45 (PME45).